Here is a 234-residue protein sequence, read N- to C-terminus: Carboxymethylenebutenolidase 1 (234 aa).

Active-site residues include cysteine 123, aspartate 171, and histidine 201.

The protein belongs to the dienelactone hydrolase family. In terms of assembly, monomer.

The enzyme catalyses 2-(5-oxo-2,5-dihydrofuran-2-ylidene)acetate + H2O = 4-oxohex-2-enedioate + H(+). Its pathway is aromatic compound metabolism; 3-chlorocatechol degradation. In terms of biological role, ring cleavage of cyclic ester dienelactone to produce maleylacetate. The chain is Carboxymethylenebutenolidase 1 (tfdEI) from Cupriavidus pinatubonensis (strain JMP 134 / LMG 1197) (Cupriavidus necator (strain JMP 134)).